The sequence spans 264 residues: Phosphonoacetaldehyde hydrolase (264 aa).

The active-site Nucleophile is the aspartate 9. 2 residues coordinate Mg(2+): aspartate 9 and alanine 11. The active-site Schiff-base intermediate with substrate is the lysine 50. Residue aspartate 183 participates in Mg(2+) binding.

It belongs to the HAD-like hydrolase superfamily. PhnX family. Homodimer. It depends on Mg(2+) as a cofactor.

It carries out the reaction phosphonoacetaldehyde + H2O = acetaldehyde + phosphate + H(+). Involved in phosphonate degradation. The sequence is that of Phosphonoacetaldehyde hydrolase from Bacillus cereus (strain AH187).